We begin with the raw amino-acid sequence, 272 residues long: 4-hydroxy-tetrahydrodipicolinate reductase (272 aa).

Gly10 to Met15 contributes to the NAD(+) binding site. Arg37 contacts NADP(+). Residues Gly100–Thr102 and Ser124–Met127 contribute to the NAD(+) site. The active-site Proton donor/acceptor is the His157. His158 is a (S)-2,3,4,5-tetrahydrodipicolinate binding site. Residue Lys161 is the Proton donor of the active site. Position 167–168 (Gly167–Thr168) interacts with (S)-2,3,4,5-tetrahydrodipicolinate.

It belongs to the DapB family.

The protein localises to the cytoplasm. The enzyme catalyses (S)-2,3,4,5-tetrahydrodipicolinate + NAD(+) + H2O = (2S,4S)-4-hydroxy-2,3,4,5-tetrahydrodipicolinate + NADH + H(+). It catalyses the reaction (S)-2,3,4,5-tetrahydrodipicolinate + NADP(+) + H2O = (2S,4S)-4-hydroxy-2,3,4,5-tetrahydrodipicolinate + NADPH + H(+). Its pathway is amino-acid biosynthesis; L-lysine biosynthesis via DAP pathway; (S)-tetrahydrodipicolinate from L-aspartate: step 4/4. Functionally, catalyzes the conversion of 4-hydroxy-tetrahydrodipicolinate (HTPA) to tetrahydrodipicolinate. The polypeptide is 4-hydroxy-tetrahydrodipicolinate reductase (Methylocella silvestris (strain DSM 15510 / CIP 108128 / LMG 27833 / NCIMB 13906 / BL2)).